The sequence spans 630 residues: A-type voltage-gated potassium channel KCND2 (630 aa).

At methionine 1–alanine 184 the chain is on the cytoplasmic side. The interaction with KCNIP1, KCNIP2, and other family members stretch occupies residues alanine 2–methionine 20. Position 38 is a phosphothreonine (threonine 38). The segment at glutamate 71–aspartate 90 is interaction with KCNIP1. The Zn(2+) site is built by histidine 105, cysteine 111, cysteine 132, and cysteine 133. A helical transmembrane segment spans residues leucine 185–threonine 206. Residues valine 207–alanine 226 lie on the Extracellular side of the membrane. A helical membrane pass occupies residues valine 227–alanine 249. Residues alanine 250 to arginine 256 lie on the Cytoplasmic side of the membrane. A helical membrane pass occupies residues phenylalanine 257–aspartate 281. The Extracellular portion of the chain corresponds to asparagine 282–glycine 287. Residues alanine 288–serine 307 form a helical; Voltage-sensor membrane-spanning segment. The Cytoplasmic segment spans residues glutamine 308–alanine 321. Residues glutamine 308 to alanine 321 form an S4-S5 linker region. The chain crosses the membrane as a helical span at residues serine 322–alanine 345. Topologically, residues glutamate 346–isoleucine 357 are extracellular. An intramembrane region (helical) is located at residues proline 358–threonine 369. Residues threonine 370, leucine 371, glycine 372, and tyrosine 373 each contribute to the K(+) site. Positions threonine 370–aspartate 375 match the Selectivity filter motif. The stretch at threonine 370–valine 377 is an intramembrane region. Topologically, residues proline 378–threonine 380 are extracellular. The chain crosses the membrane as a helical span at residues isoleucine 381–proline 403. The Cytoplasmic segment spans residues valine 404–leucine 630. At serine 438 the chain carries Phosphoserine. Residues phenylalanine 474–threonine 489 are required for dendritic targeting. The interval phenylalanine 474 to leucine 630 is important for normal channel activation and inactivation, for interaction with KCNIP2, and probably other family members as well. A phosphoserine mark is found at serine 548, serine 552, serine 572, and serine 575. A disordered region spans residues isoleucine 600 to asparagine 623. Threonine 602 and threonine 607 each carry phosphothreonine. Phosphoserine is present on serine 616. A PDZ-binding motif is present at residues valine 627–leucine 630.

It belongs to the potassium channel family. D (Shal) (TC 1.A.1.2) subfamily. Kv4.2/KCND2 sub-subfamily. In terms of assembly, homotetramer or heterotetramer with KCND1 or KCND3. Associates with the regulatory subunits KCNIP2, KCNIP3 and KCNIP4. Interacts with the regulatory subunit KCNIP1; this interaction mediates the capture of both the N- and C-terminus of KCND2, preventing N-type inactivation and stabilizing the S6 conformation, thereby accelerating closed state inactivation and recovery. Interacts with DPP10, DLG4 and DLG1. In vivo, probably exists as heteromeric complex containing variable proportions of KCND1, KCND2, KCND3, KCNIP1, KCNIP2, KCNIP3, KCNIP4, DPP6 and DPP10. The tetrameric channel can associate with up to four regulatory subunits, such as KCNIP2 or KCNIP4. Interaction with KCNIP3 promotes tetramerization and formation of a functional potassium channel. Interaction with four KCNIP4 chains does not reduce interaction with DPP10. Probably part of a complex consisting of KCNIP1, KCNIP2 isoform 3 and KCND2. Interacts with FLNA and FLNC. Interacts with NCS1/FREQ. Identified in a complex with cAMP-dependent protein kinase (PKA), CAV3, AKAP6 and KCND3 in cardiac myocytes. Interacts (via S1 and S2 helices) with DPP6; this interaction stabilizes the conformation of the S1-S2 helices and facilitates S4 conformational change, including S4 sliding up and down, thereby accelerating activation, inactivation, and recovery. In terms of processing, phosphorylation at Ser-438 in response to MAPK activation is increased in stimulated dendrites. Interaction with KCNIP2 and DPP6 propomtes phosphorylation by PKA at Ser-552. Phosphorylation at Ser-552 has no effect on interaction with KCNIP3, but is required for the regulation of channel activity by KCNIP3. Phosphorylation at Ser-552 leads to KCND2 internalization. Phosphorylated by MAPK in response to signaling via the metabotropic glutamate receptor GRM5. Phosphorylation at Ser-616 is required for the down-regulation of neuronal A-type currents in response to signaling via GRM5. In terms of tissue distribution, detected in brain cortex, hippocampus, dentate gyrus, thalamus and cerebellum. Detected in neurons from the primary visual cortex. Detected in the supraoptic nucleus in hypothalamus, in hippocampus and the habenular nucleus of the thalamus. Detected in the bed nucleus of the stria terminalis. Detected in dendritic fields in the hippocampus CA1 layer, in stratum radiatum, stratum oriens, stratum lacunosum-moleculare and stratum pyramidale. Detected in dendritic fields in the hippocampus CA3 layer and in dentate gyrus. Detected in the cerebellum granule cell layer, where it localizes at synapses. Detected in the main olfactory bulb, especially in the granule cell layer and the external plexiform layer, but also the mitral layer. Detected in heart atrium and ventricle. Detected in heart left ventricle (at protein level). Highly expressed in heart and throughout the brain, with similar levels in cortex and hypothalamus, and much higher levels in hippocampus, dentate gyrus and the habenular nucleus of the thalamus. Detected in brain, and at lower levels in heart atrium and ventricle. Detected in neurons from the bed nucleus of the stria terminalis. Detected in aorta, cardiac and smooth muscle.

It localises to the cell membrane. The protein localises to the cell projection. It is found in the dendrite. The protein resides in the synapse. Its subcellular location is the perikaryon. It localises to the postsynaptic cell membrane. The protein localises to the dendritic spine. It is found in the sarcolemma. The protein resides in the cell junction. Its subcellular location is the membrane. It localises to the caveola. The enzyme catalyses K(+)(in) = K(+)(out). Its activity is regulated as follows. Inhibited by 5 mM 4-aminopyridine (4-AP). Not inhibited by dendrotoxins and by tetraethylammonium (TEA). Inhibited by 10 mM flecainide and 20 mM quinidine. Inhibited by the heteropodatoxins HpTx(1), HpTx(2), and HpTx(3). Voltage-gated potassium channel that mediates transmembrane potassium transport in excitable membranes, primarily in the brain, but also in rodent heart. Mediates the major part of the dendritic A-type current I(SA) in brain neurons. This current is activated at membrane potentials that are below the threshold for action potentials. It regulates neuronal excitability, prolongs the latency before the first spike in a series of action potentials, regulates the frequency of repetitive action potential firing, shortens the duration of action potentials and regulates the back-propagation of action potentials from the neuronal cell body to the dendrites. Contributes to the regulation of the circadian rhythm of action potential firing in suprachiasmatic nucleus neurons, which regulates the circadian rhythm of locomotor activity. Functions downstream of the metabotropic glutamate receptor GRM5 and plays a role in neuronal excitability and in nociception mediated by activation of GRM5. Mediates the transient outward current I(to) in rodent heart left ventricle apex cells, but not in human heart, where this current is mediated by another family member. Forms tetrameric potassium-selective channels through which potassium ions pass in accordance with their electrochemical gradient. The channel alternates between opened and closed conformations in response to the voltage difference across the membrane. Can form functional homotetrameric channels and heterotetrameric channels that contain variable proportions of KCND2 and KCND3; channel properties depend on the type of pore-forming alpha subunits that are part of the channel. In vivo, membranes probably contain a mixture of heteromeric potassium channel complexes. Interaction with specific isoforms of the regulatory subunits KCNIP1, KCNIP2, KCNIP3 or KCNIP4 strongly increases expression at the cell surface and thereby increases channel activity; it modulates the kinetics of channel activation and inactivation, shifts the threshold for channel activation to more negative voltage values, shifts the threshold for inactivation to less negative voltages and accelerates recovery after inactivation. Likewise, interaction with DPP6 or DPP10 promotes expression at the cell membrane and regulates both channel characteristics and activity. Upon depolarization, the channel goes from a resting closed state (C state) to an activated but non-conducting state (C* state), from there, the channel may either inactivate (I state) or open (O state). The polypeptide is A-type voltage-gated potassium channel KCND2 (Rattus norvegicus (Rat)).